Consider the following 154-residue polypeptide: MRCPYCRHPDSRVVDSREADDGQLIRRRRSCPECGKRFTTVEEAILAVVKRSGVTEPFSRTKIIGGVRKACQGRPVDDDSVALLAQKVEETVRAKGAAELPSHEVGLAILGPLRDLDEVAYLRFASVYRSFESLADFEREIETLRTAAQAREGG.

A zinc finger spans residues 3 to 34 (CPYCRHPDSRVVDSREADDGQLIRRRRSCPEC). Residues 46 to 136 (LAVVKRSGVT…VYRSFESLAD (91 aa)) form the ATP-cone domain.

This sequence belongs to the NrdR family. Requires Zn(2+) as cofactor.

Functionally, negatively regulates transcription of bacterial ribonucleotide reductase nrd genes and operons by binding to NrdR-boxes. The sequence is that of Transcriptional repressor NrdR from Salinispora tropica (strain ATCC BAA-916 / DSM 44818 / JCM 13857 / NBRC 105044 / CNB-440).